A 208-amino-acid polypeptide reads, in one-letter code: Small ribosomal subunit protein uS4 (208 aa).

In terms of domain architecture, S4 RNA-binding spans 97–158 (TRLDNVIYRM…RAQKYLCVQE (62 aa)).

Belongs to the universal ribosomal protein uS4 family. Part of the 30S ribosomal subunit. Contacts protein S5. The interaction surface between S4 and S5 is involved in control of translational fidelity.

One of the primary rRNA binding proteins, it binds directly to 16S rRNA where it nucleates assembly of the body of the 30S subunit. Functionally, with S5 and S12 plays an important role in translational accuracy. This is Small ribosomal subunit protein uS4 from Xylella fastidiosa (strain M12).